We begin with the raw amino-acid sequence, 173 residues long: Adenine phosphoribosyltransferase (173 aa).

It belongs to the purine/pyrimidine phosphoribosyltransferase family. Homodimer.

The protein resides in the cytoplasm. The catalysed reaction is AMP + diphosphate = 5-phospho-alpha-D-ribose 1-diphosphate + adenine. The protein operates within purine metabolism; AMP biosynthesis via salvage pathway; AMP from adenine: step 1/1. In terms of biological role, catalyzes a salvage reaction resulting in the formation of AMP, that is energically less costly than de novo synthesis. This Petrotoga mobilis (strain DSM 10674 / SJ95) protein is Adenine phosphoribosyltransferase.